The sequence spans 155 residues: UPF0266 membrane protein LMHCC_1856 (155 aa).

The next 3 helical transmembrane spans lie at 8 to 28, 46 to 66, and 70 to 90; these read IFLFAANILTVLYILYNDAVI, RWDGYIFVGIIVLLFVSNTFF, and PFSTSVLLGIMGVLFIYICFF.

The protein belongs to the UPF0266 family.

It is found in the cell membrane. This is UPF0266 membrane protein LMHCC_1856 from Listeria monocytogenes serotype 4a (strain HCC23).